The primary structure comprises 375 residues: Putative F-box protein At1g12190 (375 aa).

The F-box domain maps to 1–46 (MACVKFPWELMEEILYRVPSLSLSRFKTVSKEWNTLLNDKTFIKKH).

The polypeptide is Putative F-box protein At1g12190 (Arabidopsis thaliana (Mouse-ear cress)).